The sequence spans 599 residues: MTMTLHTKASGMALLHQIQGNELEPLNRPQLKMPMERALGEVYVDNSKPTVFNYPEGAAYEFNAAAAAAAAASAPVYGQSGIAYGPGSEAAAFSANSLGAFPQLNSVSPSPLMLLHPPPQLSPFLHPHGQQVPYYLENEPSAYAVRDTGPPAFYRSNSDNRRQNGRERLSSSNEKGNMIMESAKETRYCAVCNDYASGYHYGVWSCEGCKAFFKRSIQGHNDYMCPATNQCTIDKNRRKSCQACRLRKCYEVGMMKGGIRKDRRGGRMLKHKRQRDDLEGRNEMGASGDMRAANLWPSPLVIKHTKKNSPALSLTADQMVSALLDAEPPMIYSEYDPSRPFSEASMMGLLTNLADRELVHMINWAKRVPGFGDLNLHDQVHLLECAWLEILMIGLVWRSMEHPGKLLFAPNLLLDRNQGKCVEGMVEIFDMLLATSSRFRMMNLQGEEFVCLKSIILLNSGVYTFLSSTLKSLEEKDHIHRVLDKITDTLIHLMAKAGLTLQQQHRRLAQLLLILSHIRHMSNKGMEHLYNMKCKNVVPLYDLLLEMLDAHRLHAPASRMGVPPEEPSQTQLATTSSTSAHSLQTYYIPPEAEGFPNTI.

Residues 1–188 (MTMTLHTKAS…IMESAKETRY (188 aa)) are modulating (transactivation AF-1); mediates interaction with MACROD1. Residue Ser-10 is glycosylated (O-linked (GlcNAc) serine). The interval 35–47 (MERALGEVYVDNS) is required for interaction with NCOA1. The segment at 35–178 (MERALGEVYV…LSSSNEKGNM (144 aa)) is interaction with DDX5; self-association. Residue Thr-50 is glycosylated (O-linked (GlcNAc) threonine). Phosphoserine; by CDK2 occurs at positions 108 and 110. At Ser-122 the chain carries Phosphoserine. A disordered region spans residues 147 to 175 (DTGPPAFYRSNSDNRRQNGRERLSSSNEK). Basic and acidic residues predominate over residues 158–169 (SDNRRQNGRERL). Ser-171 bears the Phosphoserine; by CK2 mark. NR C4-type zinc fingers lie at residues 189 to 209 (CAVC…CEGC) and 225 to 249 (CPAT…LRKC). The nuclear receptor DNA-binding region spans 189–254 (CAVCNDYASG…RLRKCYEVGM (66 aa)). Residues 189–314 (CAVCNDYASG…TKKNSPALSL (126 aa)) are mediates interaction with DNTTIP2. The hinge stretch occupies residues 255-314 (MKGGIRKDRRGGRMLKHKRQRDDLEGRNEMGASGDMRAANLWPSPLVIKHTKKNSPALSL). Arg-264 is subject to Asymmetric dimethylarginine; by PRMT1. The tract at residues 266 to 599 (GRMLKHKRQR…PEAEGFPNTI (334 aa)) is interaction with AKAP13. The interval 268–599 (MLKHKRQRDD…PEAEGFPNTI (332 aa)) is self-association. The NR LBD domain maps to 315 to 551 (TADQMVSALL…DLLLEMLDAH (237 aa)). The transactivation AF-2 stretch occupies residues 315 to 599 (TADQMVSALL…PEAEGFPNTI (285 aa)). 17beta-estradiol is bound by residues Glu-357 and Arg-398. Residue Cys-451 is the site of S-palmitoyl cysteine attachment. His-528 is a 17beta-estradiol binding site. Tyr-541 bears the Phosphotyrosine; by Tyr-kinases mark. The segment at 557-581 (ASRMGVPPEEPSQTQLATTSSTSAH) is disordered. The span at 568-581 (SQTQLATTSSTSAH) shows a compositional bias: low complexity. An O-linked (GlcNAc) threonine glycan is attached at Thr-575.

It belongs to the nuclear hormone receptor family. NR3 subfamily. In terms of assembly, interacts with BCAS3. Binds DNA as a homodimer. Can form a heterodimer with ESR2. Interacts with coactivator NCOA5. Interacts with PELP1, the interaction is enhanced by 17-beta-estradiol; the interaction increases ESR1 transcriptional activity. Interacts with NCOA7; the interaction is ligand-inducible. Interacts with AKAP13, CUEDC2, HEXIM1, KDM5A, MAP1S, SMARD1, and UBE1C. Interacts with MUC1; the interaction is stimulated by 7 beta-estradiol (E2) and enhances ESR1-mediated transcription. Interacts with DNTTIP2, and UIMC1. Interacts with KMT2D/MLL2. Interacts with ATAD2; the interaction is enhanced by estradiol. Interacts with KIF18A and LDB1. Interacts with RLIM (via its C-terminus). Interacts with MACROD1. Interacts with SH2D4A and PLCG. Interacts with SH2D4A; the interaction blocks binding to PLCG and inhibits estrogen-induced cell proliferation. Interacts with DYNLL1. Interacts with CCDC62; the interaction requires estradiol and appears to enhance the transcription of target genes. Interacts with NR2C1; the interaction prevents homodimerization of ESR1 and suppresses its transcriptional activity and cell growth. Interacts with DNAAF4. Interacts with PRMT2. Interacts with RBFOX2. Interacts with EP300; the interaction is estrogen-dependent and enhanced by CITED1. Interacts with CITED1; the interaction is estrogen-dependent. Interacts with FAM120B, FOXL2, PHB2 and SLC30A9. Interacts with coactivators NCOA3 and NCOA6. Interacts with STK3/MST2 only in the presence of SAV1 and vice-versa. Binds to CSNK1D. Interacts with NCOA2; NCOA2 can interact with ESR1 AF-1 and AF-2 domains simultaneously and mediate their transcriptional synergy. Interacts with DDX5. Interacts with NCOA1; the interaction seems to require a self-association of N-terminal and C-terminal regions. Interacts with ZNF366, DDX17, NFKB1, RELA, SP1 and SP3. Interacts with NRIP1. Interacts with GPER1; the interaction occurs in an estrogen-dependent manner. Interacts with CLOCK and the interaction is stimulated by estrogen. Interacts with BCAS3. Interacts with TRIP4 (ufmylated); estrogen dependent. Interacts with LMTK3; the interaction phosphorylates ESR1 (in vitro) and protects it against proteasomal degradation. Interacts with CCAR2 (via N-terminus) in a ligand-independent manner. Interacts with ZFHX3. Interacts with SFR1 in a ligand-dependent and -independent manner. Interacts with DCAF13, LATS1 and DCAF1; regulates ESR1 ubiquitination and ubiquitin-mediated proteasomal degradation. Interacts (via DNA-binding domain) with POU4F2 isoform 2 (C-terminus); this interaction increases the estrogen receptor ESR1 transcriptional activity in a DNA- and ligand 17-beta-estradiol-independent manner. Interacts with ESRRB isoform 1. Interacts with UBE3A and WBP2. Interacts with GTF2B. Interacts with RBM39. In the absence of hormonal ligand, interacts with TACC1. Interacts with PI3KR1 or PI3KR2 and PTK2/FAK1. Interacts with SRC. Interacts with BAG1; the interaction is promoted in the absence of estradiol (17-beta-estradiol/E2). Interacts with and ubiquitinated by STUB1; the interaction is promoted in the absence of estradiol (17-beta-estradiol/E2). Interacts with NEDD8. Post-translationally, phosphorylated by cyclin A/CDK2 and CK1. Phosphorylation probably enhances transcriptional activity. Dephosphorylation at Ser-122 by PPP5C inhibits its transactivation activity. Phosphorylated by LMTK3 (in vitro). Ubiquitinated. Deubiquitinated by OTUB1. In terms of processing, palmitoylated at Cys-451 by ZDHHC7 and ZDHHC21. This modification is required for plasma membrane targeting and for rapid intracellular signaling via ERK and AKT kinases and cAMP generation, but not for signaling mediated by the nuclear hormone receptor. Post-translationally, ubiquitinated; regulated by LATS1 via DCAF1 it leads to ESR1 proteasomal degradation. Deubiquitinated by OTUB1. Ubiquitinated by STUB1/CHIP; in the CA1 hippocampal region following loss of endogenous circulating estradiol (17-beta-estradiol/E2). Ubiquitinated by UBR5, leading to its degradation: UBR5 specifically recognizes and binds ligand-bound ESR1 when it is not associated with coactivators (NCOAs). In presence of NCOAs, the UBR5-degron is not accessible, preventing its ubiquitination and degradation. Dimethylated by PRMT1 at Arg-264. The methylation may favor cytoplasmic localization. Demethylated by JMJD6 at Arg-264.

Its subcellular location is the nucleus. It localises to the cytoplasm. It is found in the golgi apparatus. The protein resides in the cell membrane. Functionally, nuclear hormone receptor. The steroid hormones and their receptors are involved in the regulation of eukaryotic gene expression and affect cellular proliferation and differentiation in target tissues. Ligand-dependent nuclear transactivation involves either direct homodimer binding to a palindromic estrogen response element (ERE) sequence or association with other DNA-binding transcription factors, such as AP-1/c-Jun, c-Fos, ATF-2, Sp1 and Sp3, to mediate ERE-independent signaling. Ligand binding induces a conformational change allowing subsequent or combinatorial association with multiprotein coactivator complexes through LXXLL motifs of their respective components. Mutual transrepression occurs between the estrogen receptor (ER) and NF-kappa-B in a cell-type specific manner. Decreases NF-kappa-B DNA-binding activity and inhibits NF-kappa-B-mediated transcription from the IL6 promoter and displace RELA/p65 and associated coregulators from the promoter. Recruited to the NF-kappa-B response element of the CCL2 and IL8 promoters and can displace CREBBP. Present with NF-kappa-B components RELA/p65 and NFKB1/p50 on ERE sequences. Can also act synergistically with NF-kappa-B to activate transcription involving respective recruitment adjacent response elements; the function involves CREBBP. Can activate the transcriptional activity of TFF1. Also mediates membrane-initiated estrogen signaling involving various kinase cascades. Essential for MTA1-mediated transcriptional regulation of BRCA1 and BCAS3. Maintains neuronal survival in response to ischemic reperfusion injury when in the presence of circulating estradiol (17-beta-estradiol/E2). The sequence is that of Estrogen receptor (Esr1) from Mus musculus (Mouse).